The chain runs to 469 residues: Ribulose bisphosphate carboxylase large chain (469 aa).

At Lys8 the chain carries N6,N6,N6-trimethyllysine. 2 residues coordinate substrate: Asn117 and Thr167. The active-site Proton acceptor is Lys169. Position 171 (Lys171) interacts with substrate. Residues Lys195, Asp197, and Glu198 each coordinate Mg(2+). Residue Lys195 is modified to N6-carboxylysine. The active-site Proton acceptor is His288. Positions 289, 321, and 373 each coordinate substrate.

This sequence belongs to the RuBisCO large chain family. Type I subfamily. Heterohexadecamer of 8 large chains and 8 small chains; disulfide-linked. The disulfide link is formed within the large subunit homodimers. Mg(2+) is required as a cofactor. The disulfide bond which can form in the large chain dimeric partners within the hexadecamer appears to be associated with oxidative stress and protein turnover.

It is found in the plastid. The protein resides in the chloroplast. The enzyme catalyses 2 (2R)-3-phosphoglycerate + 2 H(+) = D-ribulose 1,5-bisphosphate + CO2 + H2O. It carries out the reaction D-ribulose 1,5-bisphosphate + O2 = 2-phosphoglycolate + (2R)-3-phosphoglycerate + 2 H(+). In terms of biological role, ruBisCO catalyzes two reactions: the carboxylation of D-ribulose 1,5-bisphosphate, the primary event in carbon dioxide fixation, as well as the oxidative fragmentation of the pentose substrate in the photorespiration process. Both reactions occur simultaneously and in competition at the same active site. This chain is Ribulose bisphosphate carboxylase large chain, found in Akania bidwillii (Turnipwood).